Here is a 269-residue protein sequence, read N- to C-terminus: Chromophore lyase CRL, chloroplastic (269 aa).

The chain crosses the membrane as a helical span at residues 19–36 (ARGLVVKTLVLIGGALLI).

It belongs to the CpcT/CpeT biliprotein lyase family. Mostly expressed in shoot apices, to a lower extent, in leaves, inflorescence stems, buds and cotyledons, and, at low levels, in roots and siliques.

It localises to the plastid. It is found in the chloroplast outer membrane. Covalently attaches a chromophore to Cys residue(s) of phycobiliproteins. Required for plastid division, and involved in cell differentiation and regulation of the cell division plane. Maintenance of plastid homeostasis controls plant preconditioning to stress and stress acclimation. In terms of biological role, confers sensitivity to cabbage leaf curl virus (CaLCuV), probably by supporting viral movement. The sequence is that of Chromophore lyase CRL, chloroplastic (CRL) from Arabidopsis thaliana (Mouse-ear cress).